Here is a 295-residue protein sequence, read N- to C-terminus: ATP synthase gamma chain (295 aa).

It belongs to the ATPase gamma chain family. As to quaternary structure, F-type ATPases have 2 components, CF(1) - the catalytic core - and CF(0) - the membrane proton channel. CF(1) has five subunits: alpha(3), beta(3), gamma(1), delta(1), epsilon(1). CF(0) has three main subunits: a, b and c.

It localises to the cell inner membrane. Produces ATP from ADP in the presence of a proton gradient across the membrane. The gamma chain is believed to be important in regulating ATPase activity and the flow of protons through the CF(0) complex. The sequence is that of ATP synthase gamma chain from Aliarcobacter butzleri (strain RM4018) (Arcobacter butzleri).